A 205-amino-acid polypeptide reads, in one-letter code: MLEARDLYCERDERTLFRGLSFTVDAGEWVQVTGGNGAGKTTLLRLLTGLARPDGGEVYWQGEPLRRVRDSFHRSLLWIGHQPGIKTRLTARENLHFFHPGDGARLPEALAQAGLAGFEDVPVAQLSAGQQRRVALARLWLTRAALWVLDEPFTAIDVNGVARLTRRMAAHTAQGGMVILTTHQPLPGAADTVRRLALTGGGAGL.

The region spanning 2–205 (LEARDLYCER…LALTGGGAGL (204 aa)) is the ABC transporter domain. An ATP-binding site is contributed by 34 to 41 (GGNGAGKT).

Belongs to the ABC transporter superfamily. CcmA exporter (TC 3.A.1.107) family. In terms of assembly, the complex is composed of two ATP-binding proteins (CcmA) and two transmembrane proteins (CcmB).

It is found in the cell inner membrane. The catalysed reaction is heme b(in) + ATP + H2O = heme b(out) + ADP + phosphate + H(+). Functionally, part of the ABC transporter complex CcmAB involved in the biogenesis of c-type cytochromes; once thought to export heme, this seems not to be the case, but its exact role is uncertain. Responsible for energy coupling to the transport system. The chain is Cytochrome c biogenesis ATP-binding export protein CcmA 1 from Salmonella typhimurium (strain LT2 / SGSC1412 / ATCC 700720).